A 48-amino-acid polypeptide reads, in one-letter code: GVACRCDSDGPTVHGDSLSGTLWLTGGCPSGWHNCRGSGPFIGYCCKK.

3 cysteine pairs are disulfide-bonded: Cys4–Cys45, Cys6–Cys35, and Cys28–Cys46.

The protein resides in the secreted. Its subcellular location is the nematocyst. Its function is as follows. Binds specifically to voltage-gated sodium channels SCN1A/Nav1.1, thereby delaying their inactivation during signal transduction. The sequence is that of Delta-actitoxin-Bcg1c from Bunodosoma cangicum (Sea anemone).